A 204-amino-acid chain; its full sequence is UPF0134 protein MPN_655 (204 aa).

The interval 46-132 (EVENKPKIPI…FNEFKDSNNQ (87 aa)) is disordered. The span at 64-80 (SPKPLKPPKPPKPPKGP) shows a compositional bias: pro residues. The segment covering 117-132 (YVTRKEFNEFKDSNNQ) has biased composition (basic and acidic residues).

Belongs to the UPF0134 family.

In Mycoplasma pneumoniae (strain ATCC 29342 / M129 / Subtype 1) (Mycoplasmoides pneumoniae), this protein is UPF0134 protein MPN_655.